A 397-amino-acid chain; its full sequence is Enoyl-[acyl-carrier-protein] reductase [NADH] (397 aa).

NAD(+) contacts are provided by residues 48–53 (GASTGY), 74–75 (FE), 111–112 (DA), and 139–140 (AA). Tyr225 is a binding site for substrate. Tyr235 functions as the Proton donor in the catalytic mechanism. NAD(+) is bound by residues Lys244 and 273–275 (VVT).

It belongs to the TER reductase family. In terms of assembly, monomer.

It catalyses the reaction a 2,3-saturated acyl-[ACP] + NAD(+) = a (2E)-enoyl-[ACP] + NADH + H(+). Its pathway is lipid metabolism; fatty acid biosynthesis. In terms of biological role, involved in the final reduction of the elongation cycle of fatty acid synthesis (FAS II). Catalyzes the reduction of a carbon-carbon double bond in an enoyl moiety that is covalently linked to an acyl carrier protein (ACP). The protein is Enoyl-[acyl-carrier-protein] reductase [NADH] of Burkholderia pseudomallei (strain 1710b).